We begin with the raw amino-acid sequence, 424 residues long: Catabolic NAD-specific glutamate dehydrogenase RocG (424 aa).

Residues Lys-80 and Lys-104 each coordinate substrate. The active-site Proton donor is Lys-116. The NAD(+) site is built by Thr-200 and Asn-231. Ser-358 is a substrate binding site.

This sequence belongs to the Glu/Leu/Phe/Val dehydrogenases family. Homohexamer. Interacts with transcriptional regulator GltC.

The enzyme catalyses L-glutamate + NAD(+) + H2O = 2-oxoglutarate + NH4(+) + NADH + H(+). In terms of biological role, devoted to catabolic function of glutamate (and other amino acids of the glutamate family) utilization as sole nitrogen source. It is not involved in anabolic function of glutamate biosynthesis since B.subtilis possesses only one route of glutamate biosynthesis from ammonia, catalyzed by glutamate synthase. Wild-type cells are unable to utilize glutamate or glutamine as a sole carbon source; thus RocG does not function physiologically to synthesize glutamate, but it is involved in the utilization of arginine, and proline as carbon or nitrogen source. The catabolic RocG is essential for controlling gltAB expression via an inhibitory interactions with the transcriptional regulator GltC in response to the availability of sugars. This chain is Catabolic NAD-specific glutamate dehydrogenase RocG, found in Bacillus subtilis (strain 168).